The following is a 187-amino-acid chain: Cytochrome c oxidase assembly protein CtaG (187 aa).

Residues 1 to 9 (MSKKSNKNL) are Cytoplasmic-facing. The chain crosses the membrane as a helical; Signal-anchor for type II membrane protein span at residues 10-30 (AFSLLGLIISMVLLSFASVPI). The Periplasmic portion of the chain corresponds to 31–187 (YNLFCKVTGY…IASLRGNTKY (157 aa)).

It belongs to the COX11/CtaG family.

The protein resides in the cell inner membrane. Functionally, exerts its effect at some terminal stage of cytochrome c oxidase synthesis, probably by being involved in the insertion of the copper B into subunit I. In Rickettsia felis (strain ATCC VR-1525 / URRWXCal2) (Rickettsia azadi), this protein is Cytochrome c oxidase assembly protein CtaG.